The chain runs to 499 residues: 3-beta-hydroxylase (499 aa).

The chain crosses the membrane as a helical; Signal-anchor for type II membrane protein span at residues 2-22; the sequence is FSSFETLILSFVSLFFMMIFI. A heme-binding site is contributed by Cys441.

The protein belongs to the cytochrome P450 family. It depends on heme as a cofactor.

The protein resides in the membrane. It carries out the reaction (+)-costunolide + reduced [NADPH--hemoprotein reductase] + O2 = 3beta-hydroxycostunolide + oxidized [NADPH--hemoprotein reductase] + H2O + H(+). The catalysed reaction is parthenolide + reduced [NADPH--hemoprotein reductase] + O2 = 3beta-hydroxyparthenolide + oxidized [NADPH--hemoprotein reductase] + H2O + H(+). It functions in the pathway secondary metabolite biosynthesis; terpenoid biosynthesis. In terms of biological role, involved in the biosynthesis of germacrene-derived sesquiterpene lactones. Component of the parthenolide biosynthetic pathway; parthenolide and conjugates are promising anti-cancer drugs highly active against colon cancer cells. Catalyzes the conversion of costunolide and parthenolide to 3-beta-hydroxycostunolide and 3-beta-hydroxyparthenolide, respectively. This Tanacetum parthenium (Feverfew) protein is 3-beta-hydroxylase.